A 531-amino-acid chain; its full sequence is Squalene epoxidase 1 (531 aa).

The chain crosses the membrane as a helical span at residues 9–29 (ILPLLISSLLISFVAFYGFFV). FAD contacts are provided by residues 70 to 71 (VA), 90 to 91 (ER), R98, R169, V185, D347, and M360. The next 2 membrane-spanning stretches (helical) occupy residues 458–478 (LVCHFFAVAVYGVIRLLIPFP) and 483–503 (IWLGAKLISGASGIIFPIIKA).

It belongs to the squalene monooxygenase family. FAD serves as cofactor. In terms of tissue distribution, expressed in seedlings, leaves, stems, inflorescences, sepals, style and siliques. Expressed in expanded cotyledons, root tips and cortical cells of the root elongation zone, but not in root hair cells. In leaves, expressed in most cells, with a very strong expression in stomata.

It localises to the membrane. It carries out the reaction squalene + reduced [NADPH--hemoprotein reductase] + O2 = (S)-2,3-epoxysqualene + oxidized [NADPH--hemoprotein reductase] + H2O + H(+). It functions in the pathway terpene metabolism; lanosterol biosynthesis; lanosterol from farnesyl diphosphate: step 2/3. Functionally, catalyzes the stereospecific oxidation of squalene to (S)-2,3-epoxysqualene, and is considered to be a rate-limiting enzyme in steroid biosynthesis. Can produce not only oxidosqualene, but also 2,3:22,23-dioxidosqualene. Main squalene epoxidase in the root. Sqe1 mutants may show defects in membrane lipid rafts, impairing the correct localization of RHD2 NADPH oxidase and the proper polarized production of ROS. This is Squalene epoxidase 1 (SQE1) from Arabidopsis thaliana (Mouse-ear cress).